The chain runs to 276 residues: Formamidopyrimidine-DNA glycosylase (276 aa).

P2 acts as the Schiff-base intermediate with DNA in catalysis. E3 serves as the catalytic Proton donor. The Proton donor; for beta-elimination activity role is filled by K60. Residues R113 and R152 each contribute to the DNA site. Residues 241–275 (NVFRKTGHPCPRCGHLIEKLIVAQRSTHICPICQK) form an FPG-type zinc finger. R265 acts as the Proton donor; for delta-elimination activity in catalysis.

This sequence belongs to the FPG family. Monomer. Zn(2+) is required as a cofactor.

It carries out the reaction Hydrolysis of DNA containing ring-opened 7-methylguanine residues, releasing 2,6-diamino-4-hydroxy-5-(N-methyl)formamidopyrimidine.. It catalyses the reaction 2'-deoxyribonucleotide-(2'-deoxyribose 5'-phosphate)-2'-deoxyribonucleotide-DNA = a 3'-end 2'-deoxyribonucleotide-(2,3-dehydro-2,3-deoxyribose 5'-phosphate)-DNA + a 5'-end 5'-phospho-2'-deoxyribonucleoside-DNA + H(+). In terms of biological role, involved in base excision repair of DNA damaged by oxidation or by mutagenic agents. Acts as a DNA glycosylase that recognizes and removes damaged bases. Has a preference for oxidized purines, such as 7,8-dihydro-8-oxoguanine (8-oxoG). Has AP (apurinic/apyrimidinic) lyase activity and introduces nicks in the DNA strand. Cleaves the DNA backbone by beta-delta elimination to generate a single-strand break at the site of the removed base with both 3'- and 5'-phosphates. The chain is Formamidopyrimidine-DNA glycosylase from Protochlamydia amoebophila (strain UWE25).